The sequence spans 163 residues: Ribosome maturation factor RimP (163 aa).

Belongs to the RimP family.

The protein localises to the cytoplasm. In terms of biological role, required for maturation of 30S ribosomal subunits. The sequence is that of Ribosome maturation factor RimP from Streptococcus thermophilus (strain CNRZ 1066).